We begin with the raw amino-acid sequence, 2298 residues long: Protein Ycf2 (2298 aa).

1637–1644 (GSIGTGRS) serves as a coordination point for ATP.

This sequence belongs to the Ycf2 family.

It is found in the plastid. The protein resides in the chloroplast stroma. Probable ATPase of unknown function. Its presence in a non-photosynthetic plant (Epifagus virginiana) and experiments in tobacco indicate that it has an essential function which is probably not related to photosynthesis. The polypeptide is Protein Ycf2 (Lotus japonicus (Lotus corniculatus var. japonicus)).